A 78-amino-acid polypeptide reads, in one-letter code: Probable [Fe-S]-dependent transcriptional repressor (78 aa).

Residues Cys-56, Cys-61, Cys-64, and Cys-70 each coordinate iron-sulfur cluster.

Belongs to the FeoC family.

Its function is as follows. May function as a transcriptional regulator that controls feoABC expression. In Cronobacter sakazakii (strain ATCC BAA-894) (Enterobacter sakazakii), this protein is Probable [Fe-S]-dependent transcriptional repressor.